Here is a 968-residue protein sequence, read N- to C-terminus: Breast cancer anti-estrogen resistance protein 1 (968 aa).

Position 1 is an N-acetylmethionine (Met1). An SH3 domain is found at 97–159; sequence DKNVLAKALY…PGNRLKILVG (63 aa). A disordered region spans residues 164-277; the sequence is KPAAPGPGPP…GPGSPAQDIY (114 aa). Over residues 167 to 182 the composition is skewed to pro residues; it reads APGPGPPATPPQPQPS. Positions 213–514 are substrate for kinases; the sequence is YLVPTPSKTQ…DGVYAVPPPA (302 aa). Residue Tyr226 is modified to Phosphotyrosine; by SRC. A compositionally biased stretch (polar residues) spans 233–249; that stretch reads PQFQSPPAKQTSTFSKQ. A Phosphoserine modification is found at Ser237. A Phosphotyrosine modification is found at Tyr332. Tyr347 is subject to Phosphotyrosine; by ABL1. Thr367 is subject to Phosphothreonine. At Ser390 the chain carries Phosphoserine. Residues 393–416 are disordered; it reads KGLPPSNHHSVYDVPPSVSKDVPD. Phosphotyrosine is present on residues Tyr460, Tyr470, and Tyr508. Disordered regions lie at residues 503–544 and 705–756; these read IDDG…SLEV and RTKA…NSEG. Residues 514–524 are compositionally biased toward basic and acidic residues; that stretch reads AEREAPTDGKR. The span at 525–542 shows a compositional bias: low complexity; the sequence is LSASSTGSTRSSQSASSL. Ser526, Ser535, and Ser737 each carry phosphoserine. Over residues 715–753 the composition is skewed to polar residues; that stretch reads GSSSLHLNPTDKASSIQSRPLPSPPKFTSQDSPDGQYEN. Positions 733-741 match the SH3-binding motif; sequence RPLPSPPKF. The divergent helix-loop-helix motif stretch occupies residues 844-894; the sequence is FYLEQCEANLTTLTDAVDAFFTAVATNQPPKIFVAHSKFVILSAHKLVFIG.

This sequence belongs to the CAS family. Forms complexes in vivo with PTK2/FAK1, adapter protein CRKL and LYN kinase. Can heterodimerize with NEDD9. Component of a complex comprised of SH2D3C, BCAR1/CAS, and CRK. Within the complex, interacts with SH2D3C (via C-terminus), and CRK. Part of a complex comprised of PTPRA, BCAR1, BCAR3 (via SH2 domain) and SRC; the formation of the complex is dependent on integrin mediated-tyrosine phosphorylation of PTPRA. Interacts with BCAR3 (via Ras-GEF domain); the interaction regulates adhesion-dependent serine phosphorylation. Interacts with SMAD2 and SMAD3. Interacts with NPHP1. Interacts with PTK2B/PYK2. Interacts (via C-terminus) with SH2D3C/CHAT isoform 2 (via C-terminus). Interacts with activated CSPG4. Interacts with BMX, INPPL1/SHIP2 and PEAK1. Part of a collagen stimulated complex involved in cell migration composed of CDC42, CRK, TNK2 and BCAR1/p130cas. Interacts with TNK2 via SH3 domains. Interacts with PTK2B/PYK2. Interacts (when tyrosine-phosphorylated) with tensin TNS1; the interaction is increased by phosphorylation of TNS1. Post-translationally, PTK2/FAK1 activation mediates phosphorylation at the YDYVHL motif; phosphorylation is most likely catalyzed by SRC family members. SRC-family kinases are recruited to the phosphorylated sites and can phosphorylate other tyrosine residues. Tyrosine phosphorylation is triggered by integrin mediated adhesion of cells to the extracellular matrix. Phosphorylated by SRC kinase in a EDN1- and PTK2B-mediated manner; phosphorylation strengthens its interaction with BCAR3 as part of the PTK2B/BCAR1/BCAR3/RAP1 signaling pathway. In terms of processing, dephosphorylated by PTPN14 at Tyr-226. Widely expressed. Higher expression in lung, intestine and testis.

The protein resides in the cell junction. It is found in the focal adhesion. It localises to the cytoplasm. The protein localises to the cell projection. Its subcellular location is the axon. Its function is as follows. Docking protein which plays a central coordinating role for tyrosine-kinase-based signaling related to cell adhesion. Implicated in induction of cell migration and cell branching. Involved in the BCAR3-mediated inhibition of TGFB signaling. This chain is Breast cancer anti-estrogen resistance protein 1 (Bcar1), found in Rattus norvegicus (Rat).